The following is a 142-amino-acid chain: 3-hydroxyacyl-[acyl-carrier-protein] dehydratase FabZ (142 aa).

The active site involves H48.

It belongs to the thioester dehydratase family. FabZ subfamily.

Its subcellular location is the cytoplasm. It catalyses the reaction a (3R)-hydroxyacyl-[ACP] = a (2E)-enoyl-[ACP] + H2O. Functionally, involved in unsaturated fatty acids biosynthesis. Catalyzes the dehydration of short chain beta-hydroxyacyl-ACPs and long chain saturated and unsaturated beta-hydroxyacyl-ACPs. This is 3-hydroxyacyl-[acyl-carrier-protein] dehydratase FabZ from Prochlorococcus marinus (strain MIT 9313).